The chain runs to 332 residues: MVRIAVDAMGGDFGPYPIIEGTILALKENPNFKAILVGHKEKIQTLIPHKYNNRIEIVHAEDVIRMDEAATEALKRKESSIYKAVELVRTGEAEGVVSAGHSGATMSLATLRIGRLKNVSRPAIATLMPTYKNKKSLVLDVGANVDCKPEHLFEFGVMGEAYATAIMNVDKPKVGLLSNGEEETKGNELTKNAFTMLKSLPTFIGNVEGNNIFDGSVDVIVCDGFTGNIVLKTSEGVADAISKLMKANIKKTPIRMAGALMMKKVFRSLKKEIDYSEYGGAPLIGVKGCTIISHGKSTPKAIKNAIYQAITYIKSDINTKIEKRLEEVTPKG.

Belongs to the PlsX family. Homodimer. Probably interacts with PlsY.

The protein resides in the cytoplasm. It catalyses the reaction a fatty acyl-[ACP] + phosphate = an acyl phosphate + holo-[ACP]. The protein operates within lipid metabolism; phospholipid metabolism. Catalyzes the reversible formation of acyl-phosphate (acyl-PO(4)) from acyl-[acyl-carrier-protein] (acyl-ACP). This enzyme utilizes acyl-ACP as fatty acyl donor, but not acyl-CoA. The protein is Phosphate acyltransferase of Nitratiruptor sp. (strain SB155-2).